Reading from the N-terminus, the 118-residue chain is Large ribosomal subunit protein uL24 (118 aa).

This sequence belongs to the universal ribosomal protein uL24 family. In terms of assembly, part of the 50S ribosomal subunit.

Functionally, one of two assembly initiator proteins, it binds directly to the 5'-end of the 23S rRNA, where it nucleates assembly of the 50S subunit. Its function is as follows. One of the proteins that surrounds the polypeptide exit tunnel on the outside of the subunit. This Synechococcus sp. (strain CC9902) protein is Large ribosomal subunit protein uL24.